The chain runs to 189 residues: Anthranilate synthase component 2 (189 aa).

The 189-residue stretch at 1–189 (MILIIDNYDS…QLLRNFLEYS (189 aa)) folds into the Glutamine amidotransferase type-1 domain. 52–54 (GPG) serves as a coordination point for L-glutamine. The Nucleophile; for GATase activity role is filled by Cys-79. Residues Gln-83 and 129-130 (SL) contribute to the L-glutamine site. Residues His-169 and Glu-171 contribute to the active site.

In terms of assembly, tetramer of two components I and two components II.

The protein localises to the plastid. Its subcellular location is the chloroplast. It catalyses the reaction chorismate + L-glutamine = anthranilate + pyruvate + L-glutamate + H(+). It participates in amino-acid biosynthesis; L-tryptophan biosynthesis; L-tryptophan from chorismate: step 1/5. In Pyropia yezoensis (Susabi-nori), this protein is Anthranilate synthase component 2 (trpG).